Consider the following 645-residue polypeptide: Envelope glycoprotein (645 aa).

A signal peptide spans 1 to 33 (MESPAFSKPLKDKINPWGPLIIMGILVRAGASV). The interval 32-237 (SVQRDSPHQV…QVLNVGPRVP (206 aa)) is receptor-binding domain (RBD). Residues 34-585 (QRDSPHQVFN…FNRSPWFTTL (552 aa)) lie on the Extracellular side of the membrane. N-linked (GlcNAc...) asparagine; by host glycosylation is found at Asn43 and Asn58. Disulfide bonds link Cys113-Cys130 and Cys122-Cys135. A disordered region spans residues 259–286 (PRPPRPPPSGAASMVPGAPPPSQQPGTG). Asn301 is a glycosylation site (N-linked (GlcNAc...) asparagine; by host). 6 cysteine pairs are disulfide-bonded: Cys311-Cys314, Cys311-Cys538, Cys341-Cys395, Cys360-Cys372, Cys402-Cys415, and Cys530-Cys537. The CXXC motif lies at 311–314 (CWLC). 2 N-linked (GlcNAc...) asparagine; by host glycosylation sites follow: Asn333 and Asn340. Asn373 and Asn409 each carry an N-linked (GlcNAc...) asparagine; by host glycan. The fusion peptide stretch occupies residues 447–467 (VSLTLALLLGGLTMGGIAAGV). Positions 490–510 (DLGALEKSVSALEKSLTSLSE) form a coiled coil. The immunosuppression stretch occupies residues 513 to 529 (LQNRRGLDLLFLKEGGL). The short motif at 530–538 (CAALKKECC) is the CX6CC element. The chain crosses the membrane as a helical span at residues 586–606 (ISTIMGPLIVLLLILLFGPCI). Cys605 carries S-palmitoyl cysteine; by host lipidation. Over 607–640 (LNRLVQFVKDRISVVQALVLTQQYHQLKSIDPEE) the chain is Cytoplasmic. A YXXL motif; contains endocytosis signal motif is present at residues 630–633 (YHQL).

The mature envelope protein (Env) consists of a trimer of SU-TM heterodimers attached by a labile interchain disulfide bond. The activated Env consists of SU monomers and TM trimers. In terms of processing, specific enzymatic cleavages in vivo yield mature proteins. Envelope glycoproteins are synthesized as an inactive precursor that is N-glycosylated and processed likely by host cell furin or by a furin-like protease in the Golgi to yield the mature SU and TM proteins. The cleavage site between SU and TM requires the minimal sequence [KR]-X-[KR]-R. The R-peptide is released from the C-terminus of the cytoplasmic tail of the TM protein upon particle formation as a result of proteolytic cleavage by the viral protease. Cleavage of this peptide is required for TM to become fusogenic. Post-translationally, the CXXC motif is highly conserved across a broad range of retroviral envelope proteins. It is thought to participate in the formation of a labile disulfide bond possibly with the CX6CC motif present in the transmembrane protein. Isomerization of the intersubunit disulfide bond to an SU intrachain disulfide bond is thought to occur upon receptor recognition in order to allow membrane fusion. The transmembrane protein is palmitoylated. In terms of processing, the R-peptide is palmitoylated.

It is found in the virion membrane. Its subcellular location is the host cell membrane. Its function is as follows. The surface protein (SU) attaches the virus to the host cell by binding to its receptor. This interaction activates a thiol in a CXXC motif of the C-terminal domain, where the other Cys residue participates in the formation of the intersubunit disulfide. The activated thiol will attack the disulfide and cause its isomerization into a disulfide isomer within the motif. This leads to SU displacement and TM refolding, and is thought to activate its fusogenic potential by unmasking its fusion peptide. Fusion occurs at the host cell plasma membrane. The transmembrane protein (TM) acts as a class I viral fusion protein. Under the current model, the protein has at least 3 conformational states: pre-fusion native state, pre-hairpin intermediate state, and post-fusion hairpin state. During viral and target cell membrane fusion, the coiled coil regions (heptad repeats) assume a trimer-of-hairpins structure, positioning the fusion peptide in close proximity to the C-terminal region of the ectodomain. The formation of this structure appears to drive apposition and subsequent fusion of viral and target cell membranes. Membranes fusion leads to delivery of the nucleocapsid into the cytoplasm. In Xenotropic MuLV-related virus (isolate VP35) (XMRV), this protein is Envelope glycoprotein (env).